The sequence spans 20 residues: NAIPGNYYRWPYAKVPYVID.

One can recognise a Peptidase M12A domain in the interval 1 to 20 (NAIPGNYYRWPYAKVPYVID).

The cofactor is Zn(2+).

Its function is as follows. Active against casein. Has a role as a digestive enzyme. This Argiope aurantia (Black-and-yellow garden spider) protein is Astacin-like peptidase p18.